A 390-amino-acid polypeptide reads, in one-letter code: Succinate--CoA ligase [ADP-forming] subunit beta (390 aa).

In terms of domain architecture, ATP-grasp spans 9–244 (KEIFREYGVP…LSEEDPVEVE (236 aa)). ATP is bound by residues Lys-46, 53 to 55 (GRG), Glu-99, Ala-102, and Glu-107. Mg(2+) contacts are provided by Asn-199 and Asp-213. Substrate-binding positions include Asn-264 and 321–323 (GIV).

It belongs to the succinate/malate CoA ligase beta subunit family. As to quaternary structure, heterotetramer of two alpha and two beta subunits. It depends on Mg(2+) as a cofactor.

The catalysed reaction is succinate + ATP + CoA = succinyl-CoA + ADP + phosphate. The enzyme catalyses GTP + succinate + CoA = succinyl-CoA + GDP + phosphate. It functions in the pathway carbohydrate metabolism; tricarboxylic acid cycle; succinate from succinyl-CoA (ligase route): step 1/1. Its function is as follows. Succinyl-CoA synthetase functions in the citric acid cycle (TCA), coupling the hydrolysis of succinyl-CoA to the synthesis of either ATP or GTP and thus represents the only step of substrate-level phosphorylation in the TCA. The beta subunit provides nucleotide specificity of the enzyme and binds the substrate succinate, while the binding sites for coenzyme A and phosphate are found in the alpha subunit. This chain is Succinate--CoA ligase [ADP-forming] subunit beta, found in Nitratiruptor sp. (strain SB155-2).